The primary structure comprises 196 residues: Crossover junction endodeoxyribonuclease RuvC (196 aa).

Catalysis depends on residues Asp-23, Glu-83, and His-156. 3 residues coordinate Mg(2+): Asp-23, Glu-83, and His-156.

Belongs to the RuvC family. As to quaternary structure, homodimer which binds Holliday junction (HJ) DNA. The HJ becomes 2-fold symmetrical on binding to RuvC with unstacked arms; it has a different conformation from HJ DNA in complex with RuvA. In the full resolvosome a probable DNA-RuvA(4)-RuvB(12)-RuvC(2) complex forms which resolves the HJ. The cofactor is Mg(2+).

Its subcellular location is the cytoplasm. It catalyses the reaction Endonucleolytic cleavage at a junction such as a reciprocal single-stranded crossover between two homologous DNA duplexes (Holliday junction).. Functionally, the RuvA-RuvB-RuvC complex processes Holliday junction (HJ) DNA during genetic recombination and DNA repair. Endonuclease that resolves HJ intermediates. Cleaves cruciform DNA by making single-stranded nicks across the HJ at symmetrical positions within the homologous arms, yielding a 5'-phosphate and a 3'-hydroxyl group; requires a central core of homology in the junction. The consensus cleavage sequence is 5'-(A/T)TT(C/G)-3'. Cleavage occurs on the 3'-side of the TT dinucleotide at the point of strand exchange. HJ branch migration catalyzed by RuvA-RuvB allows RuvC to scan DNA until it finds its consensus sequence, where it cleaves and resolves the cruciform DNA. The chain is Crossover junction endodeoxyribonuclease RuvC from Treponema pallidum (strain Nichols).